The sequence spans 354 residues: UDP-3-O-acylglucosamine N-acyltransferase (354 aa).

The active-site Proton acceptor is the His-258.

It belongs to the transferase hexapeptide repeat family. LpxD subfamily. As to quaternary structure, homotrimer.

The catalysed reaction is a UDP-3-O-[(3R)-3-hydroxyacyl]-alpha-D-glucosamine + a (3R)-hydroxyacyl-[ACP] = a UDP-2-N,3-O-bis[(3R)-3-hydroxyacyl]-alpha-D-glucosamine + holo-[ACP] + H(+). The protein operates within bacterial outer membrane biogenesis; LPS lipid A biosynthesis. In terms of biological role, catalyzes the N-acylation of UDP-3-O-acylglucosamine using 3-hydroxyacyl-ACP as the acyl donor. Is involved in the biosynthesis of lipid A, a phosphorylated glycolipid that anchors the lipopolysaccharide to the outer membrane of the cell. The protein is UDP-3-O-acylglucosamine N-acyltransferase of Rhizobium meliloti (strain 1021) (Ensifer meliloti).